Reading from the N-terminus, the 762-residue chain is Endonuclease MutS2 (762 aa).

Positions 1–22 are disordered; that stretch reads MSDAPKRSLNPTLMMNNNNTPP. Low complexity predominate over residues 9-20; that stretch reads LNPTLMMNNNNT. Residue 333-340 coordinates ATP; sequence GVNAGGKT. The region spanning 688–762 is the Smr domain; sequence LDLRGQRSEE…GGSGVKIVKL (75 aa).

The protein belongs to the DNA mismatch repair MutS family. MutS2 subfamily. As to quaternary structure, homodimer. Binds to stalled ribosomes, contacting rRNA.

With respect to regulation, ATPase activity is stimulated by DNA. Functionally, endonuclease that is involved in the suppression of homologous recombination and may thus have a key role in the control of bacterial genetic diversity. Also involved in repairing oxidative DNA damage. Has ATPase activity. Binds DNA. In terms of biological role, endonuclease that is involved in the suppression of homologous recombination and thus may have a key role in the control of bacterial genetic diversity. Acts as a ribosome collision sensor, splitting the ribosome into its 2 subunits. Detects stalled/collided 70S ribosomes which it binds and splits by an ATP-hydrolysis driven conformational change. Acts upstream of the ribosome quality control system (RQC), a ribosome-associated complex that mediates the extraction of incompletely synthesized nascent chains from stalled ribosomes and their subsequent degradation. Probably generates substrates for RQC. The polypeptide is Endonuclease MutS2 (Helicobacter pylori (strain ATCC 700392 / 26695) (Campylobacter pylori)).